Here is a 77-residue protein sequence, read N- to C-terminus: uncharacterized protein (77 aa).

The tract at residues 56–77 (SVIPKQQPPSSAAAISESEFED) is disordered. Positions 65–77 (SSAAAISESEFED) are enriched in low complexity.

This is an uncharacterized protein from Frog virus 3 (isolate Goorha) (FV-3).